The primary structure comprises 541 residues: Membrane protein insertase YidC (541 aa).

A run of 5 helical transmembrane segments spans residues 6-26, 356-376, 430-450, 463-483, and 498-518; these read FFLI…WEIT, IIHS…LAFY, LPIL…LEMV, LSAP…MFIQ, and IMMA…SGLV.

The protein belongs to the OXA1/ALB3/YidC family. Type 1 subfamily. Interacts with the Sec translocase complex via SecD. Specifically interacts with transmembrane segments of nascent integral membrane proteins during membrane integration.

It localises to the cell inner membrane. Required for the insertion and/or proper folding and/or complex formation of integral membrane proteins into the membrane. Involved in integration of membrane proteins that insert both dependently and independently of the Sec translocase complex, as well as at least some lipoproteins. Aids folding of multispanning membrane proteins. This chain is Membrane protein insertase YidC, found in Vesicomyosocius okutanii subsp. Calyptogena okutanii (strain HA).